Here is a 273-residue protein sequence, read N- to C-terminus: Ribosomal RNA small subunit methyltransferase A (273 aa).

S-adenosyl-L-methionine contacts are provided by N18, L20, G45, E66, D91, and N113.

The protein belongs to the class I-like SAM-binding methyltransferase superfamily. rRNA adenine N(6)-methyltransferase family. RsmA subfamily.

It is found in the cytoplasm. It catalyses the reaction adenosine(1518)/adenosine(1519) in 16S rRNA + 4 S-adenosyl-L-methionine = N(6)-dimethyladenosine(1518)/N(6)-dimethyladenosine(1519) in 16S rRNA + 4 S-adenosyl-L-homocysteine + 4 H(+). Functionally, specifically dimethylates two adjacent adenosines (A1518 and A1519) in the loop of a conserved hairpin near the 3'-end of 16S rRNA in the 30S particle. May play a critical role in biogenesis of 30S subunits. This is Ribosomal RNA small subunit methyltransferase A from Salmonella newport (strain SL254).